A 343-amino-acid chain; its full sequence is Isopentenyl-diphosphate delta-isomerase (343 aa).

9-10 provides a ligand contact to substrate; that stretch reads RK. FMN contacts are provided by residues serine 67, 68-70, serine 98, and asparagine 127; that span reads AMT. 98 to 100 contributes to the substrate binding site; the sequence is SQR. Substrate is bound at residue glutamine 162. Residue glutamate 163 participates in Mg(2+) binding. FMN-binding positions include lysine 194, threonine 224, 273-275, and 294-295; these read GVR and AA.

It belongs to the IPP isomerase type 2 family. As to quaternary structure, homooctamer. Dimer of tetramers. FMN is required as a cofactor. NADPH serves as cofactor. The cofactor is Mg(2+).

Its subcellular location is the cytoplasm. The enzyme catalyses isopentenyl diphosphate = dimethylallyl diphosphate. Involved in the biosynthesis of isoprenoids. Catalyzes the 1,3-allylic rearrangement of the homoallylic substrate isopentenyl (IPP) to its allylic isomer, dimethylallyl diphosphate (DMAPP). This chain is Isopentenyl-diphosphate delta-isomerase, found in Xanthobacter autotrophicus (strain ATCC BAA-1158 / Py2).